We begin with the raw amino-acid sequence, 102 residues long: Small ribosomal subunit protein uS10 (102 aa).

It belongs to the universal ribosomal protein uS10 family. In terms of assembly, part of the 30S ribosomal subunit.

Functionally, involved in the binding of tRNA to the ribosomes. This is Small ribosomal subunit protein uS10 from Caldanaerobacter subterraneus subsp. tengcongensis (strain DSM 15242 / JCM 11007 / NBRC 100824 / MB4) (Thermoanaerobacter tengcongensis).